Consider the following 251-residue polypeptide: NADPH-dependent oxidoreductase (251 aa).

The protein belongs to the flavin oxidoreductase frp family. The cofactor is FMN.

In terms of biological role, reduces FMN, organic nitro compounds and disulfide DTNB. Involved in maintenance of the cellular redox state and the disulfide stress response. The protein is NADPH-dependent oxidoreductase (nfrA) of Staphylococcus aureus (strain MSSA476).